A 603-amino-acid chain; its full sequence is MESSALLTAGVLFLFVAVVAVPIAARLGIGAVLGYLIAGIAIGPWGLGFIRDVDAILHFSELGVVFLMFIIGLELNPSKLWTLRRSIFGVGAAQVGLSTLLLGGALYLTDFSWQSALIGGVGLAMSSTAMALQLMREKGMNRSESGQLGFSVLLFQDLAVIPALALIPILAGVQGDFGDWERIGLKVAAFLGMLIGGRYLVRPLFRFIAASGVREVFTAAALLLVLGSALFMETLGLSMALGTFIAGILLAESEYRHELEIAIEPFKGLLLGLFFISVGMALNLGILYTHIVKIMVAVLVLVAVKAAVLYFLARVNRMRRSERLQFAGVLSQGGEFAFVLFSAAASFNVLKGEQLPLLLVTVTLSMMTTPLLMQLIDRILARRYNVQDVPDEKPYVEDDEPQVIVVGFGRFGQVISRLLMANKMRITVLERDISAVSLMRSYGYKVYYGDATELELLRSAGADKARSIVITCNAPEDTMEIVHLCQQHFPNLEILARARGRVEAHELLQTGVRHFSRETFSSALELGRKTLVTLGMHPHQAMRAQQHFRRLDMRMLRELMPQLTGDVAQISRVKEARRELEDIFQREMQRERRRPSVWDEDDE.

13 consecutive transmembrane segments (helical) span residues 5–25 (ALLT…PIAA), 29–49 (IGAV…GLGF), 55–75 (AILH…GLEL), 87–107 (IFGV…GALY), 115–135 (SALI…LQLM), 152–172 (VLLF…ILAG), 180–202 (WERI…YLVR), 207–227 (FIAA…LVLG), 230–250 (LFME…GILL), 268–288 (GLLL…GILY), 291–311 (IVKI…VLYF), 326–346 (FAGV…AAAS), and 356–376 (PLLL…MQLI). An RCK N-terminal domain is found at 400–521 (EPQVIVVGFG…VRHFSRETFS (122 aa)).

This sequence belongs to the monovalent cation:proton antiporter 2 (CPA2) transporter (TC 2.A.37) family. KefB subfamily. Interacts with the regulatory subunit KefG.

It localises to the cell inner membrane. Functionally, pore-forming subunit of a potassium efflux system that confers protection against electrophiles. Catalyzes K(+)/H(+) antiport. The protein is Glutathione-regulated potassium-efflux system protein KefB of Pectobacterium carotovorum subsp. carotovorum (strain PC1).